The following is a 303-amino-acid chain: Taste receptor type 2 member 13 (303 aa).

Residues 1 to 7 lie on the Extracellular side of the membrane; sequence MESALPS. A helical membrane pass occupies residues 8 to 28; it reads IFTLVIIAEFIIGNLSNGFIV. The Cytoplasmic portion of the chain corresponds to 29–55; it reads LINCIDWVSKRELSSVDKLLIILAISR. The helical transmembrane segment at 56 to 76 threads the bilayer; it reads IGLIWEILVSWFLALHSLAIF. The Extracellular portion of the chain corresponds to 77 to 85; sequence VSGTGLRIM. Residues 86 to 106 form a helical membrane-spanning segment; that stretch reads IFSWIVSNHFNLWLATILSIF. Over 107–128 the chain is Cytoplasmic; the sequence is YLLKIASFSSPAFLYLKRRVNK. The helical transmembrane segment at 129–149 threads the bilayer; sequence VILMILLGTLVFLFLNLIQIN. Over 150 to 184 the chain is Extracellular; sequence MLIKDWLDRYERNTTWNFSMSDFETFSVSVRFTMT. N-linked (GlcNAc...) asparagine glycosylation is found at N162 and N166. Residues 185–205 traverse the membrane as a helical segment; it reads MFSLTPFTVAFISFLLLVFSL. Over 206–232 the chain is Cytoplasmic; sequence QKHLQKMQLNYKGHRDPRTKVHTNALK. The helical transmembrane segment at 233 to 253 threads the bilayer; it reads IVISFLLFYASFFLSILISWI. The Extracellular portion of the chain corresponds to 254-261; sequence SELYQNTV. Residues 262 to 282 traverse the membrane as a helical segment; the sequence is IYMLCETIGAFYPSSHSFLLI. Residues 283–303 lie on the Cytoplasmic side of the membrane; sequence LGNAKLRQAFLLVAAKVWAKR.

It belongs to the G-protein coupled receptor T2R family.

The protein resides in the membrane. Its function is as follows. Receptor that may play a role in the perception of bitterness and is gustducin-linked. May play a role in sensing the chemical composition of the gastrointestinal content. The activity of this receptor may stimulate alpha gustducin, mediate PLC-beta-2 activation and lead to the gating of TRPM5. This chain is Taste receptor type 2 member 13 (TAS2R13), found in Pan paniscus (Pygmy chimpanzee).